We begin with the raw amino-acid sequence, 137 residues long: Profilin-3 (137 aa).

The protein belongs to the profilin family. In terms of assembly, interacts with ACTRT3. Detected in round spermatids.

It localises to the cytoplasm. The protein resides in the cytoskeleton. The protein localises to the nucleus. In terms of biological role, binds to actin and affects the structure of the cytoskeleton. Slightly reduces actin polymerization. Binds to poly-L-proline, phosphatidylinositol 3-phosphate (PtdIns(3)P), phosphatidylinositol 4,5-bisphosphate (PtdIns(4,5)P2), and phosphatidylinositol 4-phosphate (PtdIns(4)P). May be involved in spermatogenesis. The sequence is that of Profilin-3 (Pfn3) from Rattus norvegicus (Rat).